The chain runs to 455 residues: Lysine histidine transporter-like 4 (455 aa).

The Cytoplasmic segment spans residues 1–38 (MAGIPDHIQDQHLVEEDQPFDLEDWLPITASRNANWYY). The helical transmembrane segment at 39–59 (SAFHNVTAIVGAGVLGLPYAM) threads the bilayer. Residues 60–61 (SE) lie on the Extracellular side of the membrane. The helical transmembrane segment at 62 to 82 (LGWGPGVVVLILSWVITLYTL) threads the bilayer. At 83–113 (WQMIEMHEMFEGQRFDRYHELGQAAFGKKLG) the chain is on the cytoplasmic side. A helical transmembrane segment spans residues 114–134 (LYIIVPLQLLVEISVCIVYMV). The Extracellular portion of the chain corresponds to 135–158 (TGGKSLKNVHDLALGDGDKCTKLR). Residues 159-179 (IQHFILIFASSQFVLSLLKNF) form a helical membrane-spanning segment. At 180 to 181 (NS) the chain is on the cytoplasmic side. Residues 182–202 (ISGVSLVAAVMSVSYSTIAWV) form a helical membrane-spanning segment. Residues 203–226 (ASLRKGATTGSVEYGYRKRTTSVP) are Extracellular-facing. The helical transmembrane segment at 227–247 (LAFLSALGEMAFAYAGHNVVL) threads the bilayer. Residues 248-267 (EIQATIPSTPENPSKRPMWK) are Cytoplasmic-facing. Residues 268–288 (GAVVAYIIVAFCYFPVALVGF) form a helical membrane-spanning segment. Over 289–307 (KTFGNSVEESILESLTKPT) the chain is Extracellular. A helical membrane pass occupies residues 308 to 328 (ALVIVANMFVVIHLLGSYQVY). At 329–357 (AMPVFDMIESVMIRIWHFSPTRVLRFTIR) the chain is on the cytoplasmic side. The helical transmembrane segment at 358-378 (WTFVAATMGIAVGLPYYSALL) threads the bilayer. S379 is a topological domain (extracellular). A helical transmembrane segment spans residues 380–400 (FFGGFVFAPTTYFIPCIMWLI). Topologically, residues 401–412 (LKKPKRFSLSWC) are cytoplasmic. Residues 413-433 (MNWFCIIFGLVLMIIAPIGGL) traverse the membrane as a helical segment. Residues 434 to 455 (AKLIYNIQKGTLPNSRCNLPKH) lie on the Extracellular side of the membrane.

It belongs to the amino acid/polyamine transporter 2 family. Amino acid/auxin permease (AAAP) (TC 2.A.18.2) subfamily.

Its subcellular location is the cell membrane. In terms of biological role, amino acid transporter. This is Lysine histidine transporter-like 4 from Arabidopsis thaliana (Mouse-ear cress).